The primary structure comprises 100 residues: MPRPKKPRTIGCLPKASCFKPNGIPAHNLPRIALEADELEALRLADVLQLHQLEAAQSMGVSRQTFGNIIKRARNKVALCLVEGKVLTLPNQSQDKEKEA.

This sequence belongs to the UPF0251 family.

The sequence is that of UPF0251 protein VV2_0946 from Vibrio vulnificus (strain CMCP6).